Reading from the N-terminus, the 238-residue chain is Ribosomal RNA small subunit methyltransferase G (238 aa).

Residues glycine 77, phenylalanine 82, 128–129, and arginine 147 each bind S-adenosyl-L-methionine; that span reads AE.

The protein belongs to the methyltransferase superfamily. RNA methyltransferase RsmG family.

The protein localises to the cytoplasm. Specifically methylates the N7 position of guanine in position 535 of 16S rRNA. This chain is Ribosomal RNA small subunit methyltransferase G, found in Geobacillus kaustophilus (strain HTA426).